Here is a 699-residue protein sequence, read N- to C-terminus: SPS-sensor serine protease component SSY5 (699 aa).

2 disordered regions span residues 1 to 113 and 128 to 158; these read MVRF…LQGF and PVKE…ENAR. Positions 1-381 are excised as a propeptide; that stretch reads MVRFFGLNKK…YCVKDYIKKA (381 aa). Polar residues predominate over residues 24–38; sequence NEQNAAETSSSNVSG. Residues 39–51 show a composition bias toward basic and acidic residues; that stretch reads NEERIDPNSHDTN. Over residues 61-78 the composition is skewed to low complexity; sequence STTFGSSIQSSSIFSRGR. Polar residues predominate over residues 83–93; it reads TGASSSMATSE. Composition is skewed to low complexity over residues 97 to 109 and 144 to 154; these read HSSG…NSKN and SSSTSSTLATS. A serine protease region spans residues 459–699; that stretch reads FAITCAHVVL…QWDIDPQLDG (241 aa). Residues histidine 465, aspartate 545, and serine 640 each act as charge relay system in the active site.

The protein belongs to the peptidase S64 family. Component of the plasma membrane SPS (SSY1-PTR3-SSY5) amino acid sensor complex. In terms of processing, the propeptide is autoproteolytically cleaved from the catalytic domain but remains associated, forming an inactive protease complex. This processing occurs even in the absence of signaling.

The protein resides in the cell membrane. Functionally, protease component of the SPS-sensor system, which regulates the expression of several amino acid-metabolizing enzymes and amino acid- and peptide-permeases in response to extracellular amino acid levels by controlling the activity of two transcription factors, STP1 and STP2. Catalyzes the activation of these transcription factors, which are synthesized as latent cytoplasmic precursors, by proteolytic removal of an N-terminal inhibitory domain containing cytoplasmic retention motifs. SSY5 binds as an inactive protease complex to STP1. In response to extracellular amino acids and dependent on the other SPS-sensor components, the inhibitory propeptide is induced to dissociate, and thereby enables the catalytic domain to process STP1. This is SPS-sensor serine protease component SSY5 (SSY5) from Saccharomyces cerevisiae (strain ATCC 204508 / S288c) (Baker's yeast).